Consider the following 402-residue polypeptide: Apolipoprotein L3 (402 aa).

It belongs to the apolipoprotein L family. Widely expressed; the highest levels are in prostate, lung and placenta; also detected in kidney, bone marrow, spleen, thymus, spinal cord, adrenal gland, salivary gland, trachea and mammary gland; levels are low in brain, heart, fetal liver, pancreas and testis.

The protein localises to the cytoplasm. May affect the movement of lipids in the cytoplasm or allow the binding of lipids to organelles. The sequence is that of Apolipoprotein L3 (APOL3) from Homo sapiens (Human).